Here is an 816-residue protein sequence, read N- to C-terminus: Fibroblast growth factor receptor 1 (816 aa).

Residues 1 to 23 (MLSWRHLVFWAMLVMATLSAARP) form the signal peptide. The Extracellular segment spans residues 24–374 (APTLPEQVSP…VIMTSPLYLE (351 aa)). Residues 25-118 (PTLPEQVSPK…ETTFFAVNVS (94 aa)) enclose the Ig-like C2-type 1 domain. Cys54 and Cys100 are disulfide-bonded. N-linked (GlcNAc...) asparagine glycans are attached at residues Asn76 and Asn116. The segment at 118–152 (SDRIPSVEDDDDDDEKSSSEEKEAENSKPNPVAPF) is disordered. Residues 133-143 (KSSSEEKEAEN) are compositionally biased toward basic and acidic residues. Ig-like C2-type domains lie at 156–244 (PEKM…YQLD) and 253–355 (PILQ…AWLT). The cysteines at positions 176 and 228 are disulfide-linked. Asn238, Asn262, Asn294, Asn315, and Asn328 each carry an N-linked (GlcNAc...) asparagine glycan. Cys275 and Cys339 are oxidised to a cystine. Residues 375-395 (IIIYCTGAFLISCMLVTVIIY) form a helical membrane-spanning segment. The Cytoplasmic portion of the chain corresponds to 396-816 (KMKNTTKKTD…QHANGGLKKR (421 aa)). A Phosphotyrosine; by autocatalysis modification is found at Tyr459. A Protein kinase domain is found at 474-763 (LILGKPLGEG…VAMTSNQEYL (290 aa)). ATP-binding positions include 480–486 (LGEGCFG), Lys510, 558–560 (EYA), and Asn564. A phosphotyrosine; by autocatalysis mark is found at Tyr579 and Tyr581. Asp619 acts as the Proton acceptor in catalysis. Positions 623 and 637 each coordinate ATP. A phosphotyrosine; by autocatalysis mark is found at Tyr649, Tyr650, Tyr726, and Tyr762. Positions 776-816 (FPDTRSSTCSSGEDSVFSHDPLPDEPCLPKYQHANGGLKKR) are disordered. Residues 779–788 (TRSSTCSSGE) are compositionally biased toward polar residues.

This sequence belongs to the protein kinase superfamily. Tyr protein kinase family. Fibroblast growth factor receptor subfamily. In terms of assembly, monomer. Homodimer after ligand binding. Autophosphorylated. Binding of FGF family members together with heparan sulfate proteoglycan or heparin promotes receptor dimerization and autophosphorylation on tyrosine residues. Autophosphorylation occurs in trans between the two FGFR molecules present in the dimer and proceeds in a highly ordered manner. Phosphotyrosine residues provide docking sites for interacting proteins and so are crucial for FGFR1 function and its regulation. Post-translationally, ubiquitinated. FGFR1 is rapidly ubiquitinated after autophosphorylation, leading to internalization and degradation. In terms of processing, N-glycosylated in the endoplasmic reticulum. The N-glycan chains undergo further maturation to an Endo H-resistant form in the Golgi apparatus.

The protein localises to the cell membrane. It is found in the nucleus. It localises to the cytoplasm. Its subcellular location is the cytosol. The protein resides in the cytoplasmic vesicle. The catalysed reaction is L-tyrosyl-[protein] + ATP = O-phospho-L-tyrosyl-[protein] + ADP + H(+). With respect to regulation, present in an inactive conformation in the absence of bound ligand. Ligand binding leads to dimerization and activation by sequential autophosphorylation on tyrosine residues. Tyrosine-protein kinase that acts as a cell-surface receptor for fibroblast growth factors and plays an essential role in the regulation of embryonic development, cell proliferation, differentiation and migration. Required for normal mesoderm patterning and normal skeletogenesis. Phosphorylates PLCG1, FRS2, GAB1 and SHB. Ligand binding leads to the activation of several signaling cascades. Activation of PLCG1 leads to the production of the cellular signaling molecules diacylglycerol and inositol-1,4,5-trisphosphate. Phosphorylation of FRS2 triggers recruitment of GRB2, GAB1, PIK3R1 and SOS1, and mediates activation of RAS, MAPK1/ERK2, MAPK3/ERK1 and the MAP kinase signaling pathway, as well as of the AKT1 signaling pathway. Promotes phosphorylation of SHC1, STAT1 and PTPN11/SHP2. In the nucleus, enhances RPS6KA1 and CREB1 activity and contributes to the regulation of transcription. FGFR1 signaling is down-regulated by ubiquitination, internalization and degradation. In Pleurodeles waltl (Iberian ribbed newt), this protein is Fibroblast growth factor receptor 1 (FGFR1).